We begin with the raw amino-acid sequence, 122 residues long: Small ribosomal subunit protein uS13 (122 aa).

The tract at residues 93-122 (RRGLPVRGQRTKTNARTRKGPKKTVAGKKK) is disordered.

This sequence belongs to the universal ribosomal protein uS13 family. As to quaternary structure, part of the 30S ribosomal subunit. Forms a loose heterodimer with protein S19. Forms two bridges to the 50S subunit in the 70S ribosome.

Located at the top of the head of the 30S subunit, it contacts several helices of the 16S rRNA. In the 70S ribosome it contacts the 23S rRNA (bridge B1a) and protein L5 of the 50S subunit (bridge B1b), connecting the 2 subunits; these bridges are implicated in subunit movement. Contacts the tRNAs in the A and P-sites. The polypeptide is Small ribosomal subunit protein uS13 (Micrococcus luteus (strain ATCC 4698 / DSM 20030 / JCM 1464 / CCM 169 / CCUG 5858 / IAM 1056 / NBRC 3333 / NCIMB 9278 / NCTC 2665 / VKM Ac-2230) (Micrococcus lysodeikticus)).